Consider the following 142-residue polypeptide: Small ribosomal subunit protein uS12 (142 aa).

The protein belongs to the universal ribosomal protein uS12 family. In terms of assembly, part of the 30S ribosomal subunit.

With S4 and S5 plays an important role in translational accuracy. Located at the interface of the 30S and 50S subunits. The protein is Small ribosomal subunit protein uS12 of Methanospirillum hungatei JF-1 (strain ATCC 27890 / DSM 864 / NBRC 100397 / JF-1).